The chain runs to 63 residues: Protein BP4A (63 aa).

In terms of tissue distribution, pollen specific.

This chain is Protein BP4A (BP4A), found in Brassica napus (Rape).